We begin with the raw amino-acid sequence, 149 residues long: SsrA-binding protein (149 aa).

The protein belongs to the SmpB family.

Its subcellular location is the cytoplasm. In terms of biological role, required for rescue of stalled ribosomes mediated by trans-translation. Binds to transfer-messenger RNA (tmRNA), required for stable association of tmRNA with ribosomes. tmRNA and SmpB together mimic tRNA shape, replacing the anticodon stem-loop with SmpB. tmRNA is encoded by the ssrA gene; the 2 termini fold to resemble tRNA(Ala) and it encodes a 'tag peptide', a short internal open reading frame. During trans-translation Ala-aminoacylated tmRNA acts like a tRNA, entering the A-site of stalled ribosomes, displacing the stalled mRNA. The ribosome then switches to translate the ORF on the tmRNA; the nascent peptide is terminated with the 'tag peptide' encoded by the tmRNA and targeted for degradation. The ribosome is freed to recommence translation, which seems to be the essential function of trans-translation. The sequence is that of SsrA-binding protein from Anaplasma marginale (strain St. Maries).